The primary structure comprises 166 residues: Disulfide bond formation protein B (166 aa).

Topologically, residues 1 to 11 (MCNKLFAGRRG) are cytoplasmic. A helical transmembrane segment spans residues 12–28 (YFLGFVASFGLVGLALF). The Periplasmic segment spans residues 29 to 46 (LQQKYNLEPCPLCISQRI). Cysteines 38 and 41 form a disulfide. A helical transmembrane segment spans residues 47 to 63 (AFMALGILFLLAALHNP). The Cytoplasmic portion of the chain corresponds to 64–69 (GRVGRK). Residues 70–87 (VYGLLHVIAAATGIGIAA) form a helical membrane-spanning segment. The Periplasmic portion of the chain corresponds to 88–144 (RHIWIQANPDKVMAECGAGFDYIMETFPLKKALDLIFKGTGECSAIDWTLFGLTIPQ). Cys103 and Cys130 are joined by a disulfide. Residues 145–163 (LSLIAFVGLGLFAVLLAFH) traverse the membrane as a helical segment. Topologically, residues 164–166 (KKA) are cytoplasmic.

It belongs to the DsbB family.

Its subcellular location is the cell inner membrane. In terms of biological role, required for disulfide bond formation in some periplasmic proteins. Acts by oxidizing the DsbA protein. In Methylobacillus flagellatus (strain ATCC 51484 / DSM 6875 / VKM B-1610 / KT), this protein is Disulfide bond formation protein B.